The chain runs to 212 residues: Regulatory protein RecX (212 aa).

Belongs to the RecX family.

The protein localises to the cytoplasm. Its function is as follows. Modulates RecA activity. The chain is Regulatory protein RecX from Clostridium botulinum (strain Eklund 17B / Type B).